Reading from the N-terminus, the 450-residue chain is Class E vacuolar protein-sorting machinery protein HSE1 (450 aa).

A VHS domain is found at alanine 15–leucine 145. Disordered regions lie at residues tryptophan 141–glutamate 167, phenylalanine 179–serine 212, and proline 374–tyrosine 450. Basic and acidic residues predominate over residues glutamate 147–glutamate 167. The 20-residue stretch at aspartate 163–serine 182 folds into the UIM domain. A compositionally biased stretch (polar residues) spans glutamine 184 to leucine 196. A compositionally biased stretch (low complexity) spans glutamine 197–glutamine 209. In terms of domain architecture, SH3 spans serine 212–glutamate 271. Low complexity predominate over residues asparagine 394–asparagine 432.

It belongs to the STAM family. Component of the ESCRT-0 complex composed of HSE1 and VPS27.

Its subcellular location is the endosome membrane. Component of the ESCRT-0 complex which is the sorting receptor for ubiquitinated cargo proteins at the multivesicular body (MVB). In Candida glabrata (strain ATCC 2001 / BCRC 20586 / JCM 3761 / NBRC 0622 / NRRL Y-65 / CBS 138) (Yeast), this protein is Class E vacuolar protein-sorting machinery protein HSE1 (HSE1).